The chain runs to 74 residues: Omega-filistatoxin-Kh1a (74 aa).

In terms of processing, contains 6 disulfide bonds. In terms of tissue distribution, expressed by the venom gland.

The protein localises to the secreted. In terms of biological role, potently blocks vertebrate calcium channels Cav1 and Cav2. Is the most active on Cav2.2/CACNA1B (from HEK) (IC(50)=2.3 nM), followed by Cav2.1/CACNA1A (IC(50)=4.3 nM), Cav2.2/CACNA1B (from oocyte) (IC(50)=14.4 nM), Cav1.2/CACNA1C (IC(50)=26.8 nM), and Cav2.3/CACNA1E (IC(50)=96.4 nM). The sequence is that of Omega-filistatoxin-Kh1a from Kukulcania hibernalis (Southern house spider).